Here is a 149-residue protein sequence, read N- to C-terminus: Ribonuclease pancreatic (149 aa).

A signal peptide spans 1-25; the sequence is MGLEKSLILLPLLVLVLAWVQPSLG. Substrate is bound by residues lysine 32 and arginine 35. Catalysis depends on histidine 37, which acts as the Proton acceptor. Intrachain disulfides connect cysteine 51–cysteine 109, cysteine 65–cysteine 120, cysteine 83–cysteine 135, and cysteine 90–cysteine 97. 66 to 70 contacts substrate; sequence KRVNT. Asparagine 87 is a glycosylation site (N-linked (GlcNAc...) asparagine). The substrate site is built by lysine 91 and arginine 110. The Proton donor role is filled by histidine 144.

Belongs to the pancreatic ribonuclease family. As to quaternary structure, monomer. Interacts with and forms tight 1:1 complexes with RNH1. Dimerization of two such complexes may occur. Interaction with RNH1 inhibits this protein. As to expression, pancreas.

It is found in the secreted. It catalyses the reaction an [RNA] containing cytidine + H2O = an [RNA]-3'-cytidine-3'-phosphate + a 5'-hydroxy-ribonucleotide-3'-[RNA].. The enzyme catalyses an [RNA] containing uridine + H2O = an [RNA]-3'-uridine-3'-phosphate + a 5'-hydroxy-ribonucleotide-3'-[RNA].. Its function is as follows. Endonuclease that catalyzes the cleavage of RNA on the 3' side of pyrimidine nucleotides. Acts on single-stranded and double-stranded RNA. This is Ribonuclease pancreatic (RNASE1) from Acomys cahirinus (Cairo spiny mouse).